The primary structure comprises 264 residues: 3-methyl-2-oxobutanoate hydroxymethyltransferase (264 aa).

Mg(2+) is bound by residues D45 and D84. Residues 45–46 (DS), D84, and K112 contribute to the 3-methyl-2-oxobutanoate site. A Mg(2+)-binding site is contributed by E114. Residue E181 is the Proton acceptor of the active site.

Belongs to the PanB family. As to quaternary structure, homodecamer; pentamer of dimers. Requires Mg(2+) as cofactor.

The protein localises to the cytoplasm. It catalyses the reaction 3-methyl-2-oxobutanoate + (6R)-5,10-methylene-5,6,7,8-tetrahydrofolate + H2O = 2-dehydropantoate + (6S)-5,6,7,8-tetrahydrofolate. It functions in the pathway cofactor biosynthesis; (R)-pantothenate biosynthesis; (R)-pantoate from 3-methyl-2-oxobutanoate: step 1/2. Catalyzes the reversible reaction in which hydroxymethyl group from 5,10-methylenetetrahydrofolate is transferred onto alpha-ketoisovalerate to form ketopantoate. This chain is 3-methyl-2-oxobutanoate hydroxymethyltransferase, found in Shigella dysenteriae serotype 1 (strain Sd197).